Consider the following 196-residue polypeptide: Imidazoleglycerol-phosphate dehydratase (196 aa).

This sequence belongs to the imidazoleglycerol-phosphate dehydratase family.

The protein resides in the cytoplasm. It carries out the reaction D-erythro-1-(imidazol-4-yl)glycerol 3-phosphate = 3-(imidazol-4-yl)-2-oxopropyl phosphate + H2O. It functions in the pathway amino-acid biosynthesis; L-histidine biosynthesis; L-histidine from 5-phospho-alpha-D-ribose 1-diphosphate: step 6/9. This chain is Imidazoleglycerol-phosphate dehydratase, found in Halobacterium salinarum (strain ATCC 700922 / JCM 11081 / NRC-1) (Halobacterium halobium).